Consider the following 780-residue polypeptide: Cullin-5 (780 aa).

A Phosphoserine modification is found at Ser-34. A Phosphothreonine modification is found at Thr-210. The Cullin neddylation domain maps to Arg-711–Asp-772. Lys-724 participates in a covalent cross-link: Glycyl lysine isopeptide (Lys-Gly) (interchain with G-Cter in NEDD8).

Belongs to the cullin family. Component of multiple cullin-5-RING E3 ubiquitin-protein ligase complexes (ECS complexes, also named CRL5 complexes) formed of CUL5, Elongin BC (ELOB and ELOC), RNF7/RBX2 and a variable SOCS box domain-containing protein as substrate-specific recognition component. CUL5-containing ECS complexes specifically contain RNF7/RBX2, and not RBX1, as catalytic subunit. Component of the ECS(ASB2) complex with the substrate recognition component ASB2. Component of the ECS(ASB6) complex with the substrate recognition component ASB6. Component of the ECS(ASB7) complex with the substrate recognition component ASB7. Component of the ECS(ASB9) complex with the substrate recognition component ASB9. Component of the ECS(ASB11) complex with the substrate recognition component ASB11. Component of the ECS(ASB12) complex with the substrate recognition component ASB12. Component of the ECS(LRRC41) complex with the substrate recognition component LRRC41. Component of the ECS(SOCS1) complex with the substrate recognition component SOCS1. Component of the ECS(SOCS2) complex with the substrate recognition component SOCS2. Component of the ECS(WSB1) complex with the substrate recognition subunit WSB1. Component of the ECS(SOCS3) complex with the substrate recognition component SOCS3. Component of the ECS(SOCS7) complex with the substrate recognition component SOCS7. Component of the ECS(SPSB1) complex with the substrate recognition component SPSB1. Component of the ECS(SPSB3) complex with the substrate recognition component SPSB3. Component of the ECS(SPSB2) complex with the substrate recognition component SPSB2. Component of the ECS(SPSB4) complex with the substrate recognition component SPSB4. Component of the ECS(RAB40) complex with the substrate recognition subunit RAB40A, RAB40B or RAB40C. Component of the ECS(KLHDC1) complex with the substrate recognition component KLHDC1. Component of the ECS(PCMTD1) complex with the substrate recognition subunit PCMTD1. May also form complexes containing RBX1 and ELOA or VHL; additional evidence is however required to confirm this result in vivo. Interacts (when neddylated) with ARIH2; leading to activate the E3 ligase activity of ARIH2. Interacts with ERCC6; the interaction is induced by DNA damaging agents or inhibitors of RNA polymerase II elongation. Interacts with ELOA (via the BC-box). Interacts (unneddylated form) with DCUN1D1, DCUN1D2, DCUN1D3, DCUN1D4 and DCUN1D5; these interactions promote the cullin neddylation. Post-translationally, neddylated; which enhances the ubiquitination activity of ECS complexes and prevents binding of the inhibitor CAND1. Deneddylated via its interaction with the COP9 signalosome (CSN).

It localises to the nucleus. It participates in protein modification; protein ubiquitination. Its function is as follows. Core component of multiple cullin-5-RING E3 ubiquitin-protein ligase complexes (ECS complexes, also named CRL5 complexes), which mediate the ubiquitination and subsequent proteasomal degradation of target proteins. Acts a scaffold protein that contributes to catalysis through positioning of the substrate and the ubiquitin-conjugating enzyme. The functional specificity of the E3 ubiquitin-protein ligase complex depends on the variable SOCS box-containing substrate recognition component. Acts as a key regulator of neuron positioning during cortex development: component of various SOCS-containing ECS complexes, such as the ECS(SOCS7) complex, that regulate reelin signaling by mediating ubiquitination and degradation of DAB1. ECS(SOCS1) seems to direct ubiquitination of JAK2. The ECS(SOCS2) complex mediates the ubiquitination and subsequent proteasomal degradation of phosphorylated EPOR and GHR. The ECS(SPSB3) complex catalyzes ubiquitination of nuclear CGAS. ECS(KLHDC1) complex is part of the DesCEND (destruction via C-end degrons) pathway and mediates ubiquitination and degradation of truncated SELENOS selenoprotein produced by failed UGA/Sec decoding, which ends with a glycine. The ECS(ASB9) complex mediates ubiquitination and degradation of CKB. As part of some ECS complex, promotes 'Lys-11'-linked ubiquitination and degradation of BTRC. As part of a multisubunit ECS complex, polyubiquitinates monoubiquitinated POLR2A. As part of the ECS(RAB40C) complex, mediates ANKRD28 ubiquitination and degradation, thereby regulating protein phosphatase 6 (PP6) complex activity and focal adhesion assembly during cell migration. As part of the ECS(RAB40A) complex, mediates RHOU 'Lys-48'-linked ubiquitination and degradation, thus inhibiting focal adhesion disassembly during cell migration. As part of the ECS(RAB40B) complex, mediates LIMA1/EPLIN and RAP2 ubiquitination, thereby regulating actin cytoskeleton dynamics and stress fiber formation during cell migration. May form a cell surface vasopressin receptor. In Rattus norvegicus (Rat), this protein is Cullin-5.